Reading from the N-terminus, the 231-residue chain is Translin-associated protein X homolog (231 aa).

The protein belongs to the translin family.

It is found in the cytoplasm. It localises to the nucleus. This chain is Translin-associated protein X homolog, found in Schizosaccharomyces pombe (strain 972 / ATCC 24843) (Fission yeast).